The following is a 174-amino-acid chain: FMN reductase (NADH) SmoA (174 aa).

This sequence belongs to the non-flavoprotein flavin reductase family.

It catalyses the reaction FMNH2 + NAD(+) = FMN + NADH + 2 H(+). Its function is as follows. Part of the sulfoquinovose monooxygenase (sulfo-SMO) pathway, a D-sulfoquinovose degradation pathway that enables the complete utilization of all carbons within sulfoquinovose (SQ) with concomitant production of inorganic sulfite. Catalyzes the NADH-dependent reduction of FMN. FMNH(2) is then transferred to the sulfoquinovose monooxygenase SmoC. The sequence is that of FMN reductase (NADH) SmoA from Agrobacterium fabrum (strain C58 / ATCC 33970) (Agrobacterium tumefaciens (strain C58)).